A 768-amino-acid polypeptide reads, in one-letter code: Valine--tRNA ligase (768 aa).

The 'HIGH' region motif lies at 37-47 (PTVSGKMHMGH). Positions 510–514 (KMSKS) match the 'KMSKS' region motif. K513 contributes to the ATP binding site.

This sequence belongs to the class-I aminoacyl-tRNA synthetase family. ValS type 2 subfamily.

It localises to the cytoplasm. It catalyses the reaction tRNA(Val) + L-valine + ATP = L-valyl-tRNA(Val) + AMP + diphosphate. Its function is as follows. Catalyzes the attachment of valine to tRNA(Val). As ValRS can inadvertently accommodate and process structurally similar amino acids such as threonine, to avoid such errors, it has a 'posttransfer' editing activity that hydrolyzes mischarged Thr-tRNA(Val) in a tRNA-dependent manner. This Picrophilus torridus (strain ATCC 700027 / DSM 9790 / JCM 10055 / NBRC 100828 / KAW 2/3) protein is Valine--tRNA ligase.